The following is a 248-amino-acid chain: Probable septum site-determining protein MinC (248 aa).

The segment at 94–126 (GMPPAMRGGQPAADFEAPAGEPQANPGAPEPQI) is disordered.

Belongs to the MinC family. As to quaternary structure, interacts with MinD and FtsZ.

Cell division inhibitor that blocks the formation of polar Z ring septums. Rapidly oscillates between the poles of the cell to destabilize FtsZ filaments that have formed before they mature into polar Z rings. Prevents FtsZ polymerization. This Brucella suis biovar 1 (strain 1330) protein is Probable septum site-determining protein MinC.